The chain runs to 265 residues: Speedy protein E13 (265 aa).

The tract at residues 1–80 (MGQILGKIMM…EPEKELAPEP (80 aa)) is disordered. Over residues 66-80 (DESDDEPEKELAPEP) the composition is skewed to acidic residues.

The protein belongs to the Speedy/Ringo family.

The protein is Speedy protein E13 of Homo sapiens (Human).